The chain runs to 492 residues: 6-phosphogluconate dehydrogenase, decarboxylating 2 (492 aa).

Residues 12–17, 35–37, 77–79, and Asn-105 contribute to the NADP(+) site; these read GLAVMG, NRT, and IKA. Residues Asn-105 and 131-133 contribute to the substrate site; that span reads SGG. Lys-185 (proton acceptor) is an active-site residue. 188 to 189 contacts substrate; that stretch reads HN. The active-site Proton donor is Glu-192. Residues Tyr-193, Lys-262, Arg-289, Arg-449, and His-455 each coordinate substrate.

Belongs to the 6-phosphogluconate dehydrogenase family. In terms of assembly, homodimer.

The catalysed reaction is 6-phospho-D-gluconate + NADP(+) = D-ribulose 5-phosphate + CO2 + NADPH. The protein operates within carbohydrate degradation; pentose phosphate pathway; D-ribulose 5-phosphate from D-glucose 6-phosphate (oxidative stage): step 3/3. Catalyzes the oxidative decarboxylation of 6-phosphogluconate to ribulose 5-phosphate and CO(2), with concomitant reduction of NADP to NADPH. This Saccharomyces cerevisiae (strain ATCC 204508 / S288c) (Baker's yeast) protein is 6-phosphogluconate dehydrogenase, decarboxylating 2 (GND2).